Here is a 266-residue protein sequence, read N- to C-terminus: MRIALKIAYDGTKFYGFQRQPDLRTVEGELIKVLKKLGIIEDVKEANFKGASRTDRGVSALGNVIAFNTAKPELAEARILNHHLRDIWILGKAEVPEDFHPRFWAKNKIYRYYLFDEGIDVIKLKACAEAFLGRHDFSNFARLEEFRKPVREINRIDVFSRGRIIVVEIEGKSFLWEMTRRIITALKLCGLGVLSIGDVELMLKEKVDKKLPPAPPENLVLWEVGYEGIKFEVDAYAIEKVKREFLERFRKYLTKSAILEDWLISL.

The active-site Nucleophile is Asp-55. Residue Tyr-110 participates in substrate binding.

Belongs to the tRNA pseudouridine synthase TruA family.

It carries out the reaction uridine(38/39/40) in tRNA = pseudouridine(38/39/40) in tRNA. In terms of biological role, formation of pseudouridine at positions 38, 39 and 40 in the anticodon stem and loop of transfer RNAs. The chain is tRNA pseudouridine synthase A from Thermococcus sibiricus (strain DSM 12597 / MM 739).